A 262-amino-acid chain; its full sequence is MVLIRVLANLLILQLSYAQKSSELVIGGDECNINEHRFLVALYDYWSQSFLCGGTLINEEWVLTAKHCDRTHILIYVGVHDRSVQFDKEQRRFPKEKYFFDCSNNFTKWDKDIMLIRLNKPVSYSEHIAPLSLPSSPPIVGSVCRAMGWGQTTSPQETLPDVPHCANINLLDYEVCRTAHPQFRLPATSRTLCAGVLEGGIDTCNRDSGGPLICNGQFQGIVFWGPDPCAQPDKPGLYTKVFDHLDWIQSIIAGEKTVNCPP.

Positions 1-18 (MVLIRVLANLLILQLSYA) are cleaved as a signal peptide. A propeptide spanning residues 19–24 (QKSSEL) is cleaved from the precursor. The 229-residue stretch at 25–253 (VIGGDECNIN…HLDWIQSIIA (229 aa)) folds into the Peptidase S1 domain. 5 cysteine pairs are disulfide-bonded: Cys-31-Cys-165, Cys-52-Cys-68, Cys-144-Cys-214, Cys-176-Cys-193, and Cys-204-Cys-229. His-67 acts as the Charge relay system in catalysis. N-linked (GlcNAc...) asparagine glycosylation occurs at Asn-105. Asp-112 serves as the catalytic Charge relay system. Ser-208 functions as the Charge relay system in the catalytic mechanism.

The protein belongs to the peptidase S1 family. Snake venom subfamily. As to quaternary structure, monomer. Expressed by the venom gland.

It is found in the secreted. In terms of biological role, snake venom serine protease that may act in the hemostasis system of the prey. The chain is Snake venom serine proteinase 1 from Crotalus adamanteus (Eastern diamondback rattlesnake).